The sequence spans 177 residues: Endoribonuclease YbeY (177 aa).

3 residues coordinate Zn(2+): His114, His118, and His124. The segment at 154-177 (SYPEAIPTNPAPRRQASSSAGHIE) is disordered. A compositionally biased stretch (polar residues) spans 168–177 (QASSSAGHIE).

It belongs to the endoribonuclease YbeY family. Zn(2+) serves as cofactor.

It is found in the cytoplasm. Single strand-specific metallo-endoribonuclease involved in late-stage 70S ribosome quality control and in maturation of the 3' terminus of the 16S rRNA. The chain is Endoribonuclease YbeY from Cellvibrio japonicus (strain Ueda107) (Pseudomonas fluorescens subsp. cellulosa).